Here is a 222-residue protein sequence, read N- to C-terminus: Sugar fermentation stimulation protein homolog (222 aa).

Belongs to the SfsA family.

In Thermoplasma acidophilum (strain ATCC 25905 / DSM 1728 / JCM 9062 / NBRC 15155 / AMRC-C165), this protein is Sugar fermentation stimulation protein homolog.